Here is a 73-residue protein sequence, read N- to C-terminus: Large ribosomal subunit protein uL30 (73 aa).

This sequence belongs to the universal ribosomal protein uL30 family. As to quaternary structure, part of the 50S ribosomal subunit.

The polypeptide is Large ribosomal subunit protein uL30 (Borrelia hermsii (strain HS1 / DAH)).